A 414-amino-acid chain; its full sequence is MDNELDNLISLLQKSKASLKEKHGDRIRSIFAAHHSGSILPKEDKSLYDKCLATVDLLDEVQQMLTPPLHTLIDGFFGFINSKTLLCAVEFGIPDALSQGPKSIEQLASSSPQGELSPHRLTQVLRTLTGIGIFNYDKTSKLYSNNATSDLITTAHWSKWVYWTKFYPTEFYDMMRFLPDHIKANASRTAAQSNYNTDMEFYEYLSNSGLAKEFHRVLGAGATAQLPGMISDFPWDTLGDETVLDLGTGSGEFLFQLLENYPRMRGAFMDIPSTISRIQAECEQPGGRFSGVRDRVAGFHAGNFLDEVPASVVYTIKWCLHNWSDEDTIKILQNIRRAIVVKPEARLLIIESVLEDGRTGRPARYGDIIMMATCNGKERDIENWQAVCEQSGWEVVKSWALRNSIPSCLELRPI.

Asp270 is an S-adenosyl-L-methionine binding site. Catalysis depends on His321, which acts as the Proton acceptor.

It belongs to the class I-like SAM-binding methyltransferase superfamily. Cation-independent O-methyltransferase family. COMT subfamily.

It functions in the pathway mycotoxin biosynthesis. Its function is as follows. O-methyltransferase; part of the gene cluster that mediates the biosynthesis of sirodesmin PL, an epipolythiodioxopiperazine (ETP) characterized by a disulfide bridged cyclic dipeptide and that acts as a phytotoxin which is involved in the blackleg didease of canola. SirD catalyzes the O-prenylation of L-tyrosine (L-Tyr) in the presence of dimethylallyl diphosphate (DMAPP) to yield 4-O-dimethylallyl-L-Tyr, and therefore represents probably the first pathway-specific enzyme in the biosynthesis of sirodesmin PL. 4-O-dimethylallyl-L-Tyr, then undergoes condensation with L-Ser in a reaction catalyzed by the non-ribosomal peptide synthase sirP to form the diketopiperazine (DKP) backbone. Further bishydroxylation of the DKP performed by the cytochrome P450 monooxygenase sirC leads to the production of the intermediate phomamide. This step is essential to form the reactive thiol group required for toxicity of sirodesmin PL. The next steps of sirodesmin biosynthesis are not well understood yet, but some predictions could be made from intermediate compounds identification. Phomamide is converted into phomalizarine via oxidation, probably by sirT. Further oxidation, methylation (by sirM or sirN) and reduction steps convert phomalizarine to deacetyl sirodesmin. Finally, acetyltransferase sirH probably acetylates deacetyl sirodesmin to produce sirodesmin PL. The protein is O-methyltransferase sirM of Leptosphaeria maculans (Blackleg fungus).